A 249-amino-acid polypeptide reads, in one-letter code: Chitooligosaccharide deacetylase (249 aa).

Mg(2+)-binding residues include histidine 61 and histidine 125.

The protein belongs to the YdjC deacetylase family. ChbG subfamily. As to quaternary structure, homodimer. The cofactor is Mg(2+).

The protein localises to the cytoplasm. It catalyses the reaction N,N'-diacetylchitobiose + H2O = N-acetyl-beta-D-glucosaminyl-(1-&gt;4)-D-glucosamine + acetate. It carries out the reaction diacetylchitobiose-6'-phosphate + H2O = N'-monoacetylchitobiose-6'-phosphate + acetate. The protein operates within glycan degradation; chitin degradation. Functionally, involved in the degradation of chitin. ChbG is essential for growth on the acetylated chitooligosaccharides chitobiose and chitotriose but is dispensable for growth on cellobiose and chitosan dimer, the deacetylated form of chitobiose. Deacetylation of chitobiose-6-P and chitotriose-6-P is necessary for both the activation of the chb promoter by the regulatory protein ChbR and the hydrolysis of phosphorylated beta-glucosides by the phospho-beta-glucosidase ChbF. Catalyzes the removal of only one acetyl group from chitobiose-6-P to yield monoacetylchitobiose-6-P, the inducer of ChbR and the substrate of ChbF. This chain is Chitooligosaccharide deacetylase, found in Escherichia coli O7:K1 (strain IAI39 / ExPEC).